The chain runs to 113 residues: Thioredoxin H-type (113 aa).

In terms of domain architecture, Thioredoxin spans G2–A112. Active-site nucleophile residues include C37 and C40. A disulfide bond links C37 and C40.

This sequence belongs to the thioredoxin family. Plant H-type subfamily.

It localises to the cytoplasm. In terms of biological role, participates in various redox reactions through the reversible oxidation of the active center dithiol to a disulfide. The H form is known to activate a number of cytosolic enzymes. The polypeptide is Thioredoxin H-type (TRXH) (Chlamydomonas reinhardtii (Chlamydomonas smithii)).